Consider the following 356-residue polypeptide: Testis-expressed protein 19.1 (356 aa).

Positions 1-78 are interaction with LIRE1; sequence MCPPVSVRHG…WDAEPMEHLS (78 aa). Acidic residues predominate over residues 59 to 72; that stretch reads LSEEEEEEEVWDAE. The interval 59-107 is disordered; it reads LSEEEEEEEVWDAEPMEHLSESESLESDSKQDAGSEQDAGSEPNTRSEQ. The segment covering 73–91 has biased composition (basic and acidic residues); it reads PMEHLSESESLESDSKQDA. Positions 139-186 are important for interaction with piRNA; sequence QWVVFSISVPTELLPQEAVPLDLGPEDVEWTQALPWRLDVLFPCSHRL.

As to quaternary structure, interacts with UBR2; does not lead to Tex19.1 degradation and stabilizes it. Interacts with piRNA-associated proteins DDX4, EDC4, MAEL, PIWIL1, PIWIL2, RANBP9 and TDRD6. Interacts with L1RE1.

It is found in the cytoplasm. Its function is as follows. Required during spermatogenesis and placenta development, participating in the repression of retrotransposable elements and prevent their mobilization. Collaborates with the Piwi-interacting RNA (piRNA) pathway, which mediates the repression of transposable elements during meiosis by forming complexes composed of piRNAs and Piwi proteins. Interacts with Piwi proteins and directly binds piRNAs, a class of 24 to 30 nucleotide RNAs that are generated by a Dicer-independent mechanism and are primarily derived from transposons and other repeated sequence elements. Also during spermatogenesis, promotes, with UBR2, SPO11-dependent recombination foci to accumulate and drive robust homologous chromosome synapsis. Interacts with LINE-1 retrotransposon encoded LIRE1, stimulates LIRE1 polyubiquitination, mediated by UBR2, and degradation, inhibiting LINE-1 retrotransposon mobilization. This is Testis-expressed protein 19.1 (Tex19.1) from Rattus norvegicus (Rat).